The following is a 37-amino-acid chain: Protein YnaM (37 aa).

Residues 4–24 (ILIITSLLIIFSIFSHALIKL) form a helical membrane-spanning segment.

The protein resides in the cell inner membrane. This Escherichia coli (strain K12) protein is Protein YnaM.